The primary structure comprises 225 residues: Imidazole glycerol phosphate synthase subunit HisH (225 aa).

Residues 5–220 (KNVIVDTGCA…LELDSTELNQ (216 aa)) form the Glutamine amidotransferase type-1 domain. Cysteine 80 functions as the Nucleophile in the catalytic mechanism. Catalysis depends on residues histidine 195 and glutamate 197.

Heterodimer of HisH and HisF.

The protein localises to the cytoplasm. The enzyme catalyses 5-[(5-phospho-1-deoxy-D-ribulos-1-ylimino)methylamino]-1-(5-phospho-beta-D-ribosyl)imidazole-4-carboxamide + L-glutamine = D-erythro-1-(imidazol-4-yl)glycerol 3-phosphate + 5-amino-1-(5-phospho-beta-D-ribosyl)imidazole-4-carboxamide + L-glutamate + H(+). It catalyses the reaction L-glutamine + H2O = L-glutamate + NH4(+). It functions in the pathway amino-acid biosynthesis; L-histidine biosynthesis; L-histidine from 5-phospho-alpha-D-ribose 1-diphosphate: step 5/9. Its function is as follows. IGPS catalyzes the conversion of PRFAR and glutamine to IGP, AICAR and glutamate. The HisH subunit catalyzes the hydrolysis of glutamine to glutamate and ammonia as part of the synthesis of IGP and AICAR. The resulting ammonia molecule is channeled to the active site of HisF. The sequence is that of Imidazole glycerol phosphate synthase subunit HisH from Colwellia psychrerythraea (strain 34H / ATCC BAA-681) (Vibrio psychroerythus).